The sequence spans 341 residues: S-adenosylmethionine:tRNA ribosyltransferase-isomerase (341 aa).

The protein belongs to the QueA family. As to quaternary structure, monomer.

It localises to the cytoplasm. The catalysed reaction is 7-aminomethyl-7-carbaguanosine(34) in tRNA + S-adenosyl-L-methionine = epoxyqueuosine(34) in tRNA + adenine + L-methionine + 2 H(+). It functions in the pathway tRNA modification; tRNA-queuosine biosynthesis. Functionally, transfers and isomerizes the ribose moiety from AdoMet to the 7-aminomethyl group of 7-deazaguanine (preQ1-tRNA) to give epoxyqueuosine (oQ-tRNA). The sequence is that of S-adenosylmethionine:tRNA ribosyltransferase-isomerase from Herminiimonas arsenicoxydans.